The following is a 1490-amino-acid chain: WD repeat-containing protein 7 (1490 aa).

WD repeat units lie at residues 17-56 (APTH…QINP), 62-104 (GHTA…CIEF), 156-199 (ISPD…SDMQ), 324-366 (LICP…DKQG), 404-443 (NEPL…IVQL), 462-507 (GHRN…MKHI), and 558-597 (RHLF…LDRC). Disordered regions lie at residues 761 to 783 (DEEE…YRSS) and 911 to 945 (GDHM…IVQG). Residues 768 to 782 (IMRQRREESDPEYRS) are compositionally biased toward basic and acidic residues. S935 carries the phosphoserine modification. A compositionally biased stretch (polar residues) spans 936–945 (PPTSSNIVQG). WD repeat units follow at residues 1351–1390 (PAIC…CQTI) and 1392–1432 (GHKG…LGSI). S1456 carries the post-translational modification Phosphoserine.

In Homo sapiens (Human), this protein is WD repeat-containing protein 7 (WDR7).